The sequence spans 497 residues: FAD-linked oxidoreductase fogF (497 aa).

Residues M1–A18 form the signal peptide. Residues N59–L229 enclose the FAD-binding PCMH-type domain.

It belongs to the oxygen-dependent FAD-linked oxidoreductase family. FAD is required as a cofactor.

It functions in the pathway secondary metabolite biosynthesis. Its function is as follows. FAD-linked oxidoreductase; part of the gene cluster that mediates the biosynthesis of flavoglaucin and congeners (including aspergin, dihydroauroglaucin and auroglaucin), prenylated salicylaldehyde derivatives carrying a saturated or an unsaturated C-7 side chain. The PKS fogA releases the carboxylic acid (8E,10E,12E)-3,5,7-trihydroxytetradeca-8,10,12-trienoic acid as its product, as well as derivatives with one and two double bonds. FogA is indeed able to reduce the initial triketide, thus being at least partially responsible for the differently saturated heptyl side chains of flavoglaucin congeners. The oxidoreductases fogB, fogC and fogD modify the nascent polyketide in fogA-bound form and, together, fogA, fogB, fogC and fogD are necessary for the formation of the aromatic core and the cyclized PKS products are released as salicyl alcohols. In particular, fogB is responsible for oxidation of a hydroxyl group or reduction of remaining double bond(s) at the C-7 residue whereas fogD is probably involved in the reductive release of the modified PKS products. The cytochrome P450 monooxygenase fogE is then responsible for the hydroxylation at C-3 of the benzene ring. The fogE products are substrates of the prenyltransferase fogH and the prenylated benzyl alcohols are subsequently oxidized by the fogF to produce the final aryl aldehydes flavoglaucin and congeners. The short-chain dehydrogenase fogG does not seem to be involved in the biosynthesis of the prenylated salicylaldehyde derivatives. The polypeptide is FAD-linked oxidoreductase fogF (Aspergillus ruber (strain CBS 135680)).